Here is a 353-residue protein sequence, read N- to C-terminus: MFEGFGPNKKRKISKLAAEQSLAQQPWVEKYRPKNLDEVTAQDHAVTVLKKTLKSANLPHMLFYGPPGTGKTSTILALTKELYGPDLMKSRILELNASDERGISIVREKVKNFARLTVSKPSKHDLENYPCPPYKIIILDEADSMTADAQSALRRTMETYSGVTRFCLICNYVTRIIDPLASRCSKFRFKALDASNAIDRLRFISEQENVKCDDGVLERILDISAGDLRRGITLLQSASKGAQYLGDGKNITSTQVEELAGVVPHDILIEIVEKVKSGDFDEIKKYVNTFMKSGWSAASVVNQLHEYYITNDNFDTNFKNQISWLLFTTDSRLNNGTNEHIQLLNLLVKISQL.

The residue at position 1 (Met1) is an N-acetylmethionine. ATP-binding positions include Val28, Arg32, Gly65 to Ser73, Asn171, and Arg229.

This sequence belongs to the activator 1 small subunits family. Replication factor C (RFC) is a heteropentamer of subunits RFC1, RFC2, RFC3, RFC4 and RFC5 and forms a complex with POL30/PCNA in the presence of ATP. Component of the RAD24-RFC complex which consists of RAD14, RFC2, RFC3, RFC4 and RFC5 and associates with the checkpoint clamp DDC1:MEC3:RAD17 complex. Component of the ELG1-RFC complex which consists of ELG1, RFC2, RFC3, RFC4 and RFC5. Component of the CTF18-RFC complex, which consists of CTF18, CTF8, DCC1, RFC2, RFC3, RFC4 and RFC5. RFC2 interacts with ECO1.

It is found in the nucleus. In terms of biological role, component of ATP-dependent clamp loader (RFC and RFC-like) complexes for DNA clamps, such as the POL30/PCNA homotrimer and the checkpoint clamp DDC1:MEC3:RAD17 complex. During a clamp loading circle, the RFC:clamp complex binds to DNA and the recognition of the double-stranded/single-stranded junction stimulates ATP hydrolysis by RFC. The complex presumably provides bipartite ATP sites in which one subunit supplies a catalytic site for hydrolysis of ATP bound to the neighboring subunit. Dissociation of RFC from the clamp leaves the clamp encircling DNA. Component of the replication factor C (RFC or activator 1) complex which loads POL30/PCNA and acts during elongation of primed DNA templates by DNA polymerase delta and epsilon. RFC has an essential but redundant activity in sister chromatid cohesion establishment. Component of the RFC-like complex CTF18-RFC which is required for efficient establishment of chromosome cohesion during S-phase and may load or unload POL30/PCNA. Component of the RFC-like RAD24-RFC complex which loads the checkpoint clamp DDC1:MEC3:RAD17 complex and is involved in DNA repair pathways. Component of the RFC-like ELG1-RFC complex which appears to have a role in DNA replication, replication fork re-start, recombination and repair. RFC2 binds ATP and single-stranded DNA. The chain is Replication factor C subunit 2 (RFC2) from Saccharomyces cerevisiae (strain ATCC 204508 / S288c) (Baker's yeast).